Consider the following 162-residue polypeptide: Cyclic pyranopterin monophosphate synthase (162 aa).

Substrate-binding positions include 75–77 (LCH) and 113–114 (ME). D128 is an active-site residue.

This sequence belongs to the MoaC family. Homohexamer; trimer of dimers.

The catalysed reaction is (8S)-3',8-cyclo-7,8-dihydroguanosine 5'-triphosphate = cyclic pyranopterin phosphate + diphosphate. The protein operates within cofactor biosynthesis; molybdopterin biosynthesis. In terms of biological role, catalyzes the conversion of (8S)-3',8-cyclo-7,8-dihydroguanosine 5'-triphosphate to cyclic pyranopterin monophosphate (cPMP). In Klebsiella pneumoniae (strain 342), this protein is Cyclic pyranopterin monophosphate synthase.